The primary structure comprises 362 residues: Peptide chain release factor 1 (362 aa).

Gln232 is modified (N5-methylglutamine).

It belongs to the prokaryotic/mitochondrial release factor family. In terms of processing, methylated by PrmC. Methylation increases the termination efficiency of RF1.

It localises to the cytoplasm. In terms of biological role, peptide chain release factor 1 directs the termination of translation in response to the peptide chain termination codons UAG and UAA. This is Peptide chain release factor 1 from Myxococcus xanthus.